The sequence spans 568 residues: Kinetochore protein NDC80 homolog (568 aa).

The interval 1–59 (MRGGAAGKRRTTVGFGGAPPPPPPSIEQQRHLFNSRDSDASFASSRPSSIGLGGRGASD) is disordered. The span at 28–39 (QQRHLFNSRDSD) shows a compositional bias: basic and acidic residues. A compositionally biased stretch (low complexity) spans 40-49 (ASFASSRPSS). 2 coiled-coil regions span residues 241-334 (KESL…AEVA) and 433-469 (IESKRSLLGSIQLQINDLEEKMKLVKKETQELSTKCD).

This sequence belongs to the NDC80/HEC1 family. As to quaternary structure, component of the NDC80 complex, which consists of NDC80, NUF2, SPC24 and SPC25.

The protein localises to the chromosome. Its subcellular location is the centromere. Its function is as follows. Acts as a component of the essential kinetochore-associated NDC80 complex, which is required for chromosome segregation and spindle checkpoint activity to ensure proper cell division. The chain is Kinetochore protein NDC80 homolog from Arabidopsis thaliana (Mouse-ear cress).